Consider the following 153-residue polypeptide: UPF0756 membrane protein BA_4840/GBAA_4840/BAS4489 (153 aa).

Helical transmembrane passes span 8-28 (FLFI…TVAI), 54-74 (LGVT…EIGF), 87-107 (WIAL…VQLL), and 117-137 (LVFG…GPLI).

The protein belongs to the UPF0756 family.

It is found in the cell membrane. The chain is UPF0756 membrane protein BA_4840/GBAA_4840/BAS4489 from Bacillus anthracis.